Here is a 496-residue protein sequence, read N- to C-terminus: Cobyric acid synthase (496 aa).

In terms of domain architecture, GATase cobBQ-type spans Lys-257 to Val-447. Catalysis depends on Cys-338, which acts as the Nucleophile. The active site involves His-439.

It belongs to the CobB/CobQ family. CobQ subfamily.

The protein operates within cofactor biosynthesis; adenosylcobalamin biosynthesis. Functionally, catalyzes amidations at positions B, D, E, and G on adenosylcobyrinic A,C-diamide. NH(2) groups are provided by glutamine, and one molecule of ATP is hydrogenolyzed for each amidation. This chain is Cobyric acid synthase, found in Parabacteroides distasonis (strain ATCC 8503 / DSM 20701 / CIP 104284 / JCM 5825 / NCTC 11152).